We begin with the raw amino-acid sequence, 581 residues long: ATP-dependent lipid A-core flippase (581 aa).

6 helical membrane passes run 21 to 41 (TVAI…ALFI), 65 to 85 (FVVI…SYCL), 138 to 158 (ALLI…VMFY), 161 to 181 (WQLS…VTVV), 246 to 266 (LSVS…LWVV), and 271 to 291 (MIDT…MMLL). In terms of domain architecture, ABC transmembrane type-1 spans 24–306 (IVAIIGMIGY…LANVNSDMQR (283 aa)). An ABC transporter domain is found at 338–575 (IEVKNVTFKY…NGTYSALCKM (238 aa)). 372–379 (GRSGSGKS) serves as a coordination point for ATP.

Belongs to the ABC transporter superfamily. Lipid exporter (TC 3.A.1.106) family. Homodimer.

The protein resides in the cell inner membrane. It carries out the reaction ATP + H2O + lipid A-core oligosaccharideSide 1 = ADP + phosphate + lipid A-core oligosaccharideSide 2.. Functionally, involved in lipopolysaccharide (LPS) biosynthesis. Translocates lipid A-core from the inner to the outer leaflet of the inner membrane. Transmembrane domains (TMD) form a pore in the inner membrane and the ATP-binding domain (NBD) is responsible for energy generation. The chain is ATP-dependent lipid A-core flippase from Pseudoalteromonas translucida (strain TAC 125).